Reading from the N-terminus, the 245-residue chain is tRNA (guanine-N(1)-)-methyltransferase (245 aa).

Residues Gly-113 and 133 to 138 (IGDYVL) each bind S-adenosyl-L-methionine.

This sequence belongs to the RNA methyltransferase TrmD family. Homodimer.

Its subcellular location is the cytoplasm. It catalyses the reaction guanosine(37) in tRNA + S-adenosyl-L-methionine = N(1)-methylguanosine(37) in tRNA + S-adenosyl-L-homocysteine + H(+). In terms of biological role, specifically methylates guanosine-37 in various tRNAs. This Oceanobacillus iheyensis (strain DSM 14371 / CIP 107618 / JCM 11309 / KCTC 3954 / HTE831) protein is tRNA (guanine-N(1)-)-methyltransferase.